The primary structure comprises 484 residues: ATP synthase subunit beta (484 aa).

162 to 169 (GGAGVGKT) contributes to the ATP binding site.

The protein belongs to the ATPase alpha/beta chains family. F-type ATPases have 2 components, CF(1) - the catalytic core - and CF(0) - the membrane proton channel. CF(1) has five subunits: alpha(3), beta(3), gamma(1), delta(1), epsilon(1). CF(0) has three main subunits: a(1), b(2) and c(9-12). The alpha and beta chains form an alternating ring which encloses part of the gamma chain. CF(1) is attached to CF(0) by a central stalk formed by the gamma and epsilon chains, while a peripheral stalk is formed by the delta and b chains.

Its subcellular location is the cell inner membrane. The catalysed reaction is ATP + H2O + 4 H(+)(in) = ADP + phosphate + 5 H(+)(out). Its function is as follows. Produces ATP from ADP in the presence of a proton gradient across the membrane. The catalytic sites are hosted primarily by the beta subunits. This is ATP synthase subunit beta from Agrobacterium fabrum (strain C58 / ATCC 33970) (Agrobacterium tumefaciens (strain C58)).